The primary structure comprises 483 residues: Glutamate--tRNA ligase (483 aa).

Residues 9-19 carry the 'HIGH' region motif; it reads PSPTGNLHIGT. Positions 250 to 254 match the 'KMSKS' region motif; it reads KLSKR. Lys-253 contacts ATP.

It belongs to the class-I aminoacyl-tRNA synthetase family. Glutamate--tRNA ligase type 1 subfamily. In terms of assembly, monomer.

It is found in the cytoplasm. The enzyme catalyses tRNA(Glu) + L-glutamate + ATP = L-glutamyl-tRNA(Glu) + AMP + diphosphate. Its function is as follows. Catalyzes the attachment of glutamate to tRNA(Glu) in a two-step reaction: glutamate is first activated by ATP to form Glu-AMP and then transferred to the acceptor end of tRNA(Glu). This is Glutamate--tRNA ligase from Synechocystis sp. (strain ATCC 27184 / PCC 6803 / Kazusa).